The primary structure comprises 386 residues: Lipid-A-disaccharide synthase (386 aa).

Belongs to the LpxB family.

The catalysed reaction is a lipid X + a UDP-2-N,3-O-bis[(3R)-3-hydroxyacyl]-alpha-D-glucosamine = a lipid A disaccharide + UDP + H(+). The protein operates within bacterial outer membrane biogenesis; LPS lipid A biosynthesis. Functionally, condensation of UDP-2,3-diacylglucosamine and 2,3-diacylglucosamine-1-phosphate to form lipid A disaccharide, a precursor of lipid A, a phosphorylated glycolipid that anchors the lipopolysaccharide to the outer membrane of the cell. The chain is Lipid-A-disaccharide synthase from Chromohalobacter salexigens (strain ATCC BAA-138 / DSM 3043 / CIP 106854 / NCIMB 13768 / 1H11).